Consider the following 332-residue polypeptide: uncharacterized protein (332 aa).

The tract at residues 306 to 332 (EKNTSEVTEPKTGPSGTKDNYHLHSIF) is disordered.

This is an uncharacterized protein from Homo sapiens (Human).